The primary structure comprises 862 residues: DNA replication licensing factor MCM4 (862 aa).

Over residues 1-12 (MASRGGGGGGDG) the composition is skewed to gly residues. The tract at residues 1 to 132 (MASRGGGGGG…GGGGGGAGAD (132 aa)) is disordered. Low complexity-rich tracts occupy residues 20–41 (SSPD…PQSG) and 52–64 (SASP…SLGG). A C4-type zinc finger spans residues 289–317 (CLVCGFYSEPVMVDRGRVTEPHICQKEQC). Residues 453-659 (IYDRLTRSLA…QTDRRLAKHI (207 aa)) enclose the MCM domain. An ATP-binding site is contributed by 503–510 (GDPGTSKS). Residues 635 to 638 (SRFD) carry the Arginine finger motif.

It belongs to the MCM family. Component of the minichromosome maintenance (MCM) complex, a heterotetramer composed of MCM2, MCM3, MCM4, MCM5, MCM6 and MCM7.

The protein localises to the nucleus. The catalysed reaction is ATP + H2O = ADP + phosphate + H(+). Probable component of the MCM2-7 complex (MCM complex) that may function as a DNA helicase and which is essential to undergo a single round of replication initiation and elongation per cell cycle in eukaryotic cells. The protein is DNA replication licensing factor MCM4 (MCM4) of Oryza sativa subsp. japonica (Rice).